Here is a 360-residue protein sequence, read N- to C-terminus: Phosphoserine aminotransferase (360 aa).

Residue Arg41 coordinates L-glutamate. Pyridoxal 5'-phosphate contacts are provided by Trp101, Thr152, Asp172, and Gln195. Lys196 bears the N6-(pyridoxal phosphate)lysine mark. Position 237–238 (237–238 (NT)) interacts with pyridoxal 5'-phosphate.

It belongs to the class-V pyridoxal-phosphate-dependent aminotransferase family. SerC subfamily. In terms of assembly, homodimer. The cofactor is pyridoxal 5'-phosphate.

The protein resides in the cytoplasm. It catalyses the reaction O-phospho-L-serine + 2-oxoglutarate = 3-phosphooxypyruvate + L-glutamate. The catalysed reaction is 4-(phosphooxy)-L-threonine + 2-oxoglutarate = (R)-3-hydroxy-2-oxo-4-phosphooxybutanoate + L-glutamate. It participates in amino-acid biosynthesis; L-serine biosynthesis; L-serine from 3-phospho-D-glycerate: step 2/3. It functions in the pathway cofactor biosynthesis; pyridoxine 5'-phosphate biosynthesis; pyridoxine 5'-phosphate from D-erythrose 4-phosphate: step 3/5. Its function is as follows. Catalyzes the reversible conversion of 3-phosphohydroxypyruvate to phosphoserine and of 3-hydroxy-2-oxo-4-phosphonooxybutanoate to phosphohydroxythreonine. The polypeptide is Phosphoserine aminotransferase (Burkholderia ambifaria (strain ATCC BAA-244 / DSM 16087 / CCUG 44356 / LMG 19182 / AMMD) (Burkholderia cepacia (strain AMMD))).